The chain runs to 1162 residues: PAN2-PAN3 deadenylation complex catalytic subunit PAN2 (1162 aa).

WD repeat units lie at residues 27–66 (AKEK…YTRH), 153–193 (NTVQ…VVKT), 196–233 (GHSC…NVYD), and 300–339 (HPCQ…TGFT). The interval 341–491 (TATTILEYPD…LMNYKPSNDR (151 aa)) is linker. Residues 401 to 443 (VPLPPKSSAASSSHTALSTSSDSRPNTARSGNPSSGGQKYRLL) form a disordered region. The span at 407–423 (SSAASSSHTALSTSSDS) shows a compositional bias: low complexity. Polar residues predominate over residues 424–437 (RPNTARSGNPSSGG). Residues 492 to 904 (EVPPAFTKLQ…TPEIAIYSDA (413 aa)) form the USP domain. The Exonuclease domain maps to 956-1126 (VALDAEFVAL…IEDAYTALVL (171 aa)). Residues Asp959, Glu961, Asp1068, and Asp1119 each contribute to the a divalent metal cation site.

The protein belongs to the peptidase C19 family. PAN2 subfamily. As to quaternary structure, forms a heterotrimer with an asymmetric homodimer of the regulatory subunit PAN3 to form the poly(A)-nuclease (PAN) deadenylation complex. The cofactor is a divalent metal cation.

The protein localises to the cytoplasm. The catalysed reaction is Exonucleolytic cleavage of poly(A) to 5'-AMP.. With respect to regulation, positively regulated by the regulatory subunit PAN3. Functionally, catalytic subunit of the poly(A)-nuclease (PAN) deadenylation complex, one of two cytoplasmic mRNA deadenylases involved in mRNA turnover. PAN specifically shortens poly(A) tails of RNA and the activity is stimulated by poly(A)-binding protein PAB1. PAN deadenylation is followed by rapid degradation of the shortened mRNA tails by the CCR4-NOT complex. Deadenylated mRNAs are then degraded by two alternative mechanisms, namely exosome-mediated 3'-5' exonucleolytic degradation, or deadenylation-dependent mRNA decaping and subsequent 5'-3' exonucleolytic degradation by XRN1. May also be involved in post-transcriptional maturation of mRNA poly(A) tails. The sequence is that of PAN2-PAN3 deadenylation complex catalytic subunit PAN2 from Eremothecium gossypii (strain ATCC 10895 / CBS 109.51 / FGSC 9923 / NRRL Y-1056) (Yeast).